The chain runs to 119 residues: Holo-[acyl-carrier-protein] synthase (119 aa).

The Mg(2+) site is built by Asp-5 and Glu-51.

Belongs to the P-Pant transferase superfamily. AcpS family. Requires Mg(2+) as cofactor.

It localises to the cytoplasm. It catalyses the reaction apo-[ACP] + CoA = holo-[ACP] + adenosine 3',5'-bisphosphate + H(+). Its function is as follows. Transfers the 4'-phosphopantetheine moiety from coenzyme A to a Ser of acyl-carrier-protein. The chain is Holo-[acyl-carrier-protein] synthase from Helicobacter pylori (strain ATCC 700392 / 26695) (Campylobacter pylori).